We begin with the raw amino-acid sequence, 678 residues long: UvrABC system protein C (678 aa).

Residues 1–13 are compositionally biased toward basic residues; it reads MKKNISYGKHKTF. A disordered region spans residues 1–25; it reads MKKNISYGKHKTFPSKLNGLEKQHS. Positions 69-147 constitute a GIY-YIG domain; it reads HKPGVYRMFD…IKRLHPRFNV (79 aa). Positions 257 to 292 constitute a UVR domain; sequence QSVKNDMIQAMHKAAEDLDFEQAAVYRDRLSALSHI.

This sequence belongs to the UvrC family. As to quaternary structure, interacts with UvrB in an incision complex.

It is found in the cytoplasm. Its function is as follows. The UvrABC repair system catalyzes the recognition and processing of DNA lesions. UvrC both incises the 5' and 3' sides of the lesion. The N-terminal half is responsible for the 3' incision and the C-terminal half is responsible for the 5' incision. The protein is UvrABC system protein C of Bartonella quintana (strain Toulouse) (Rochalimaea quintana).